The chain runs to 308 residues: GATA transcription factor 10 (308 aa).

Residues 214–268 form a GATA-type zinc finger; sequence DGIVRICTHCETITTPQWRQGPSGPKTLCNACGVRFKSGRLVPEYRPASSPTFIP.

Belongs to the type IV zinc-finger family. Class A subfamily.

The protein localises to the nucleus. Its function is as follows. Transcriptional activator that specifically binds 5'-GATA-3' or 5'-GAT-3' motifs within gene promoters. May be involved in the regulation of some light-responsive genes. In Arabidopsis thaliana (Mouse-ear cress), this protein is GATA transcription factor 10 (GATA10).